A 309-amino-acid polypeptide reads, in one-letter code: Malate dehydrogenase (309 aa).

NAD(+) contacts are provided by residues 10-15 (GAGNVG) and aspartate 34. Substrate is bound by residues arginine 83 and arginine 89. NAD(+) is bound by residues asparagine 96 and 119–121 (VTN). Substrate is bound by residues asparagine 121 and arginine 152. Histidine 176 functions as the Proton acceptor in the catalytic mechanism.

It belongs to the LDH/MDH superfamily. MDH type 3 family.

The enzyme catalyses (S)-malate + NAD(+) = oxaloacetate + NADH + H(+). In terms of biological role, catalyzes the reversible oxidation of malate to oxaloacetate. This is Malate dehydrogenase from Desulforudis audaxviator (strain MP104C).